A 288-amino-acid polypeptide reads, in one-letter code: 4-diphosphocytidyl-2-C-methyl-D-erythritol kinase (288 aa).

Lys-11 is an active-site residue. 95-105 (PVAAGMAGGSS) contributes to the ATP binding site. Residue Asp-137 is part of the active site.

Belongs to the GHMP kinase family. IspE subfamily.

It carries out the reaction 4-CDP-2-C-methyl-D-erythritol + ATP = 4-CDP-2-C-methyl-D-erythritol 2-phosphate + ADP + H(+). It functions in the pathway isoprenoid biosynthesis; isopentenyl diphosphate biosynthesis via DXP pathway; isopentenyl diphosphate from 1-deoxy-D-xylulose 5-phosphate: step 3/6. Catalyzes the phosphorylation of the position 2 hydroxy group of 4-diphosphocytidyl-2C-methyl-D-erythritol. The protein is 4-diphosphocytidyl-2-C-methyl-D-erythritol kinase of Lachnospira eligens (strain ATCC 27750 / DSM 3376 / VPI C15-48 / C15-B4) (Eubacterium eligens).